The chain runs to 515 residues: MDEFHRYGKEDNSRQQCFLYPLFFQEDLYAISHDHYLDGSSSSEPMEHLSSNDQFSFLTVKRLIGQIRQQNHSIVLFVNCAPNPLADCKKSSYSESVLEGLTLVLEVPFSIRSKYSVEGMNEWKSFRSIHSIFPFLEDKFPHSNYISDARIPYSIHPEILVRTFRRLIRDAPSLHPLRSVLYEYRNSPENLQRSIIVVPRVNTRFFLFLWNYYVYECESILFSLLKRSSHSRSVAHRPFPQRTHFHRKIKHIIIFSRRNSLKSIWLLKDPKINYVRYGERSIIAIKGTHLLVKKCRYYLLLFRQCYFHLWSEPYRVCSHQLSKNCSSSPGYFLRVRMNPLFVRTKMLDELFIADLITNEFDPIVPIVPILGLLAREKFCDVSGRPISKLSWTNLTDDDILNRFDQIWRNLFHYYSGSFGRDGLYRIKYILSLSCAKTLACKHKSTIRVVRKELGPELFQKSFSKEREFDSLPFSSKAAARSQRERIWHSDIPQINPLVNSWQKIQDLKIENLFDQ.

Belongs to the intron maturase 2 family. MatK subfamily.

It localises to the plastid. The protein localises to the chloroplast. Usually encoded in the trnK tRNA gene intron. Probably assists in splicing its own and other chloroplast group II introns. In Pinus pumila (Dwarf Siberian pine), this protein is Maturase K.